The chain runs to 410 residues: Serine hydroxymethyltransferase (410 aa).

(6S)-5,6,7,8-tetrahydrofolate is bound by residues leucine 116 and 120–122 (GHL). Residue lysine 225 is modified to N6-(pyridoxal phosphate)lysine.

It belongs to the SHMT family. As to quaternary structure, homodimer. The cofactor is pyridoxal 5'-phosphate.

The protein localises to the cytoplasm. It catalyses the reaction (6R)-5,10-methylene-5,6,7,8-tetrahydrofolate + glycine + H2O = (6S)-5,6,7,8-tetrahydrofolate + L-serine. Its pathway is one-carbon metabolism; tetrahydrofolate interconversion. It functions in the pathway amino-acid biosynthesis; glycine biosynthesis; glycine from L-serine: step 1/1. In terms of biological role, catalyzes the reversible interconversion of serine and glycine with tetrahydrofolate (THF) serving as the one-carbon carrier. This reaction serves as the major source of one-carbon groups required for the biosynthesis of purines, thymidylate, methionine, and other important biomolecules. Also exhibits THF-independent aldolase activity toward beta-hydroxyamino acids, producing glycine and aldehydes, via a retro-aldol mechanism. This is Serine hydroxymethyltransferase from Lacticaseibacillus casei (strain BL23) (Lactobacillus casei).